Reading from the N-terminus, the 314-residue chain is Elongation factor Ts (314 aa).

An involved in Mg(2+) ion dislocation from EF-Tu region spans residues 82-85 (TDFV).

Belongs to the EF-Ts family.

It is found in the cytoplasm. Associates with the EF-Tu.GDP complex and induces the exchange of GDP to GTP. It remains bound to the aminoacyl-tRNA.EF-Tu.GTP complex up to the GTP hydrolysis stage on the ribosome. This is Elongation factor Ts from Nostoc punctiforme (strain ATCC 29133 / PCC 73102).